A 408-amino-acid polypeptide reads, in one-letter code: Energy-coupling factor transporter ATP-binding protein EcfA1 (408 aa).

Residues 140-374 enclose the ABC transporter domain; the sequence is IEIKNLSFKY…KEFLRNIQLD (235 aa). Position 174–181 (174–181) interacts with ATP; sequence GHNGSGKS.

It belongs to the ABC transporter superfamily. Energy-coupling factor EcfA family. In terms of assembly, forms a stable energy-coupling factor (ECF) transporter complex composed of 2 membrane-embedded substrate-binding proteins (S component), 2 ATP-binding proteins (A component) and 2 transmembrane proteins (T component).

It localises to the cell membrane. Functionally, ATP-binding (A) component of a common energy-coupling factor (ECF) ABC-transporter complex. Unlike classic ABC transporters this ECF transporter provides the energy necessary to transport a number of different substrates. The chain is Energy-coupling factor transporter ATP-binding protein EcfA1 from Mycoplasma capricolum subsp. capricolum (strain California kid / ATCC 27343 / NCTC 10154).